The sequence spans 115 residues: Large ribosomal subunit protein uL22 (115 aa).

This sequence belongs to the universal ribosomal protein uL22 family. In terms of assembly, part of the 50S ribosomal subunit.

In terms of biological role, this protein binds specifically to 23S rRNA; its binding is stimulated by other ribosomal proteins, e.g. L4, L17, and L20. It is important during the early stages of 50S assembly. It makes multiple contacts with different domains of the 23S rRNA in the assembled 50S subunit and ribosome. Functionally, the globular domain of the protein is located near the polypeptide exit tunnel on the outside of the subunit, while an extended beta-hairpin is found that lines the wall of the exit tunnel in the center of the 70S ribosome. This is Large ribosomal subunit protein uL22 from Coxiella burnetii (strain CbuK_Q154) (Coxiella burnetii (strain Q154)).